Reading from the N-terminus, the 144-residue chain is Deoxyuridine 5'-triphosphate nucleotidohydrolase (144 aa).

Substrate contacts are provided by residues 63 to 65 (RSG), Asn-76, and 80 to 82 (TVD).

The protein belongs to the dUTPase family. Mg(2+) serves as cofactor.

It catalyses the reaction dUTP + H2O = dUMP + diphosphate + H(+). The protein operates within pyrimidine metabolism; dUMP biosynthesis; dUMP from dCTP (dUTP route): step 2/2. Its function is as follows. This enzyme is involved in nucleotide metabolism: it produces dUMP, the immediate precursor of thymidine nucleotides and it decreases the intracellular concentration of dUTP so that uracil cannot be incorporated into DNA. The polypeptide is Deoxyuridine 5'-triphosphate nucleotidohydrolase (Flavobacterium johnsoniae (strain ATCC 17061 / DSM 2064 / JCM 8514 / BCRC 14874 / CCUG 350202 / NBRC 14942 / NCIMB 11054 / UW101) (Cytophaga johnsonae)).